The following is a 125-amino-acid chain: uncharacterized protein (125 aa).

This is an uncharacterized protein from Bacillus subtilis (strain 168).